The chain runs to 734 residues: Photosystem I P700 chlorophyll a apoprotein A2 (734 aa).

Transmembrane regions (helical) follow at residues 46-69 (IFASHFGQLAIIFLWTSGNLFHVA), 135-158 (LYTGALFLLFLSALSLIAGWLHLQ), 175-199 (LNHHLSGLFGVSSLAWTGHLVHVAI), 273-291 (IAHHHLAIAILFLIAGHMY), 330-353 (IHFQLGLALASLGVITSLVAQHMY), 369-395 (AALYTHHQYIAGFIMTGAFAHGAIFFI), 417-439 (AIISHLSWASLFLGFHTLGLYVH), and 517-535 (FLVHHAIALGLHTTTLILV). Residues cysteine 559 and cysteine 568 each coordinate [4Fe-4S] cluster. The next 2 membrane-spanning stretches (helical) occupy residues 575-596 (AFYLAVFWMLNTIGWVTFYWHW) and 643-665 (LSVWAWMFLFGHLVWATGFMFLI). Chlorophyll a is bound by residues histidine 654, methionine 662, and tyrosine 670. Tryptophan 671 contacts phylloquinone. Residues 707–727 (LVGLAHFSVGYIFTYAAFLIA) form a helical membrane-spanning segment.

It belongs to the PsaA/PsaB family. As to quaternary structure, the PsaA/B heterodimer binds the P700 chlorophyll special pair and subsequent electron acceptors. PSI consists of a core antenna complex that captures photons, and an electron transfer chain that converts photonic excitation into a charge separation. The eukaryotic PSI reaction center is composed of at least 11 subunits. P700 is a chlorophyll a/chlorophyll a' dimer, A0 is one or more chlorophyll a, A1 is one or both phylloquinones and FX is a shared 4Fe-4S iron-sulfur center. is required as a cofactor.

Its subcellular location is the plastid. It is found in the chloroplast thylakoid membrane. It carries out the reaction reduced [plastocyanin] + hnu + oxidized [2Fe-2S]-[ferredoxin] = oxidized [plastocyanin] + reduced [2Fe-2S]-[ferredoxin]. PsaA and PsaB bind P700, the primary electron donor of photosystem I (PSI), as well as the electron acceptors A0, A1 and FX. PSI is a plastocyanin-ferredoxin oxidoreductase, converting photonic excitation into a charge separation, which transfers an electron from the donor P700 chlorophyll pair to the spectroscopically characterized acceptors A0, A1, FX, FA and FB in turn. Oxidized P700 is reduced on the lumenal side of the thylakoid membrane by plastocyanin. The protein is Photosystem I P700 chlorophyll a apoprotein A2 of Gossypium hirsutum (Upland cotton).